A 355-amino-acid chain; its full sequence is Putative beta-lactamase HcpE (355 aa).

The first 22 residues, 1 to 22, serve as a signal peptide directing secretion; it reads MNIKILKILVGGLFFLSLNAHL. 8 TPR repeats span residues 27–60, 63–96, 98–131, 132–166, 202–240, 245–275, 276–311, and 312–344; these read DNSF…GVSE, TQLG…DDRE, CFGL…LKHP, ESCY…DMAK, GQAC…NNSG, LGSM…MGSA, VSCS…MGDE, and VGCF…GMKQ. 9 cysteine pairs are disulfide-bonded: cysteine 54–cysteine 62, cysteine 90–cysteine 98, cysteine 126–cysteine 134, cysteine 160–cysteine 168, cysteine 197–cysteine 205, cysteine 234–cysteine 242, cysteine 270–cysteine 278, cysteine 306–cysteine 314, and cysteine 338–cysteine 346.

The protein belongs to the hcp beta-lactamase family.

It is found in the secreted. The catalysed reaction is a beta-lactam + H2O = a substituted beta-amino acid. Its function is as follows. May hydrolyze 6-aminopenicillinic acid and 7-aminocephalosporanic acid (ACA) derivatives. The sequence is that of Putative beta-lactamase HcpE (hcpE) from Helicobacter pylori (strain J99 / ATCC 700824) (Campylobacter pylori J99).